We begin with the raw amino-acid sequence, 318 residues long: Porphobilinogen deaminase (318 aa).

Cys-241 is modified (S-(dipyrrolylmethanemethyl)cysteine).

The protein belongs to the HMBS family. In terms of assembly, monomer. Dipyrromethane serves as cofactor.

The enzyme catalyses 4 porphobilinogen + H2O = hydroxymethylbilane + 4 NH4(+). It functions in the pathway porphyrin-containing compound metabolism; protoporphyrin-IX biosynthesis; coproporphyrinogen-III from 5-aminolevulinate: step 2/4. Its function is as follows. Tetrapolymerization of the monopyrrole PBG into the hydroxymethylbilane pre-uroporphyrinogen in several discrete steps. This Geobacter sulfurreducens (strain ATCC 51573 / DSM 12127 / PCA) protein is Porphobilinogen deaminase.